Here is a 567-residue protein sequence, read N- to C-terminus: Urease subunit alpha (567 aa).

The Ni(2+) site is built by H134, H136, and K217. An N6-carboxylysine modification is found at K217. Residue H219 coordinates substrate. 2 residues coordinate Ni(2+): H246 and H272. H320 serves as the catalytic Proton donor. Residue D360 coordinates Ni(2+).

Belongs to the metallo-dependent hydrolases superfamily. Urease alpha subunit family. Heterotrimer of UreA (gamma), UreB (beta) and UreC (alpha) subunits. Three heterotrimers associate to form the active enzyme. Ni cation is required as a cofactor. Post-translationally, carboxylation allows a single lysine to coordinate two nickel ions.

The protein resides in the cytoplasm. The catalysed reaction is urea + 2 H2O + H(+) = hydrogencarbonate + 2 NH4(+). Its pathway is nitrogen metabolism; urea degradation; CO(2) and NH(3) from urea (urease route): step 1/1. This is Urease subunit alpha from Polynucleobacter asymbioticus (strain DSM 18221 / CIP 109841 / QLW-P1DMWA-1) (Polynucleobacter necessarius subsp. asymbioticus).